The sequence spans 241 residues: Antimicrobial ginkbilobin-2-like protein (241 aa).

An N-terminal signal peptide occupies residues 1-23; the sequence is MLSSKYISVSFLLLSLSLHAVNC. Gnk2-homologous domains follow at residues 25–127 and 133–238; these read DPLY…NIDF and NKNK…LYPF. 4 disulfide bridges follow: cysteine 81/cysteine 90, cysteine 93/cysteine 118, cysteine 192/cysteine 201, and cysteine 204/cysteine 229. Asparagine 89 is a glycosylation site (N-linked (GlcNAc...) asparagine).

This sequence belongs to the cysteine-rich repeat secretory protein family.

The protein localises to the secreted. In terms of biological role, possesses antimicrobial activity toward the oomycete Phytophthora cinnamomi (ink disease agent), thus reducing its growth rate and confering an increased resistance to the plant. The protein is Antimicrobial ginkbilobin-2-like protein of Castanea crenata (Japanese chestnut).